The primary structure comprises 270 residues: Tryptophan synthase alpha chain (270 aa).

Active-site proton acceptor residues include Glu49 and Asp60.

It belongs to the TrpA family. Tetramer of two alpha and two beta chains.

It carries out the reaction (1S,2R)-1-C-(indol-3-yl)glycerol 3-phosphate + L-serine = D-glyceraldehyde 3-phosphate + L-tryptophan + H2O. Its pathway is amino-acid biosynthesis; L-tryptophan biosynthesis; L-tryptophan from chorismate: step 5/5. Functionally, the alpha subunit is responsible for the aldol cleavage of indoleglycerol phosphate to indole and glyceraldehyde 3-phosphate. This chain is Tryptophan synthase alpha chain, found in Buchnera aphidicola subsp. Melaphis rhois.